The following is a 20-amino-acid chain: uncharacterized protein (20 aa).

This is an uncharacterized protein from Escherichia coli (strain K12).